The sequence spans 437 residues: MANVIVIGAQWGDEGKGKITDLLSKSADVVVRYQGGVNAGHTVVVEGKIFKLHLIPSGILYPDTDCIIGSGTVIDPKVIIEELDQVEALGISTANLMISGAAHVTMPYHRMIDKASEKRRGSKKIGTTGRGIGPTYADKSERTGIRMIDLVNPDRLKEQINWTVNYKNVILEKLYDLSPLNPEEVVNEYLNFADRLRPHVIDASLKIYNAIQLKRNILFEGAQGTLLDLDHGTYPYVTSSNPVAGGACVGTGVGPTMIDRVIGVAKAYTTRVGEGPFPTEAKDEIGDLLCDRGAEFGTTTGRKRRCGWFDAVIGRYAVRINGMDCMAITKLDVLDGLEEIKVCVAYDMEGKRCEDFPGSAIQLSKCKPIYKTLPGWKESTVDCRNLEDLPKQALDYLRFLAELMNVPIAIVSLGASRHQTIVVEDPIHGPKRGLLYS.

GTP-binding positions include 12-18 (GDEGKGK) and 40-42 (GHT). Asp-13 acts as the Proton acceptor in catalysis. 2 residues coordinate Mg(2+): Asp-13 and Gly-40. IMP contacts are provided by residues 13–16 (DEGK), 38–41 (NAGH), Thr-128, Arg-142, Gln-223, Thr-238, and Arg-302. The active-site Proton donor is the His-41. Residue 298–304 (TTTGRKR) participates in substrate binding. GTP contacts are provided by residues Arg-304, 330–332 (KLD), and 412–414 (SLG).

This sequence belongs to the adenylosuccinate synthetase family. Homodimer. Mg(2+) serves as cofactor.

It is found in the cytoplasm. The enzyme catalyses IMP + L-aspartate + GTP = N(6)-(1,2-dicarboxyethyl)-AMP + GDP + phosphate + 2 H(+). It functions in the pathway purine metabolism; AMP biosynthesis via de novo pathway; AMP from IMP: step 1/2. In terms of biological role, plays an important role in the de novo pathway of purine nucleotide biosynthesis. Catalyzes the first committed step in the biosynthesis of AMP from IMP. This chain is Adenylosuccinate synthetase, found in Trichodesmium erythraeum (strain IMS101).